We begin with the raw amino-acid sequence, 167 residues long: Small ribosomal subunit protein uS5 (167 aa).

Residues 12 to 75 (LQEKLIAVNR…EKARRNMTTI (64 aa)) enclose the S5 DRBM domain.

This sequence belongs to the universal ribosomal protein uS5 family. Part of the 30S ribosomal subunit. Contacts proteins S4 and S8.

With S4 and S12 plays an important role in translational accuracy. Functionally, located at the back of the 30S subunit body where it stabilizes the conformation of the head with respect to the body. This Vibrio parahaemolyticus serotype O3:K6 (strain RIMD 2210633) protein is Small ribosomal subunit protein uS5.